A 582-amino-acid polypeptide reads, in one-letter code: MLVLRKFRWRKWTAETLESTKMTRPIDVHQLLKSRSAGPKYMSVEERERVVIEHSNDEVDLGVEYAKKRNVDEVAEDSARESKKKSKRLDFDWDPADNTLEGYQPIVNPVILERIRQQEDQGDDLEAQYLGKSWREKLLVEMDERDWRIMREEFNITSKGKGAVKHPLRNWSETNVIPTDLVRALTEGMGFDEPTAIQRITIPNAISSNKSVPRDILGIASTGSGKTLAFSIPILARLDALPARPVNLKTLDGPLALVLVPTRELAQQISQEINRLLSAWENKKNLNAVSIVGGHSMSDISHTLRNGCDILIATPGRLLDVLDNHLVVLNKIQSLVLDEADRMIDLGFEDQMKSILSHLMADELAARQTMLFTATLSSSVESIAKGYLKNPLHVSVGSRWDSDKPLITQVVRHTGDDDKKLSFLKDDLIKNGLPAIIFINYKETADWLTLRLSDRFNIVTLHGSKSQSQRESAIQKLKSGTANVLIATNVAARGLDIPDVALVVNFQMSKKFDDYIHRIGRTGRAGKTGIAVTYLTGEEDPQLIKQLAKYVKDVDPNKENDFPEECAKHFGIVSETRNRIIY.

The Q motif motif lies at 170 to 199; the sequence is NWSETNVIPTDLVRALTEGMGFDEPTAIQR. Positions 207-394 constitute a Helicase ATP-binding domain; it reads SSNKSVPRDI…KGYLKNPLHV (188 aa). 220–227 provides a ligand contact to ATP; it reads ASTGSGKT. The DEAD box motif lies at 338-341; it reads DEAD. The 155-residue stretch at 416–570 folds into the Helicase C-terminal domain; it reads DDDKKLSFLK…DFPEECAKHF (155 aa).

It belongs to the DEAD box helicase family. DDX23/PRP28 subfamily. As to quaternary structure, component of the U5 snRNP complex.

The protein localises to the cytoplasm. Its subcellular location is the nucleus. The enzyme catalyses ATP + H2O = ADP + phosphate + H(+). Its function is as follows. ATP-dependent RNA helicase involved in mRNA splicing. May destabilize the U1/5'-splice site duplex to permit an effective competition for the 5'-splice site by the U6 snRNA, resulting in the switch between U1 and U6 at the 5'-splice site. May also act to unwind the U4/U6 base-pairing interaction in the U4/U6/U5 snRNP, facilitating the first covalent step of splicing. The chain is Pre-mRNA-splicing ATP-dependent RNA helicase PRP28 (PRP28) from Candida glabrata (strain ATCC 2001 / BCRC 20586 / JCM 3761 / NBRC 0622 / NRRL Y-65 / CBS 138) (Yeast).